A 105-amino-acid polypeptide reads, in one-letter code: Large ribosomal subunit protein mL49 (105 aa).

The N-terminal 15 residues, 1–15, are a transit peptide targeting the mitochondrion; sequence MRSSLKPVLSNLRFN.

It belongs to the mitochondrion-specific ribosomal protein mL49 family. As to quaternary structure, component of the mitochondrial large ribosomal subunit (mt-LSU). Mature yeast 74S mitochondrial ribosomes consist of a small (37S) and a large (54S) subunit. The 37S small subunit contains a 15S ribosomal RNA (15S mt-rRNA) and at least 32 different proteins. The 54S large subunit contains a 21S rRNA (21S mt-rRNA) and at least 45 different proteins.

The protein resides in the mitochondrion. Its function is as follows. Component of the mitochondrial ribosome (mitoribosome), a dedicated translation machinery responsible for the synthesis of mitochondrial genome-encoded proteins, including at least some of the essential transmembrane subunits of the mitochondrial respiratory chain. The mitoribosomes are attached to the mitochondrial inner membrane and translation products are cotranslationally integrated into the membrane. The chain is Large ribosomal subunit protein mL49 (img2) from Schizosaccharomyces pombe (strain 972 / ATCC 24843) (Fission yeast).